The primary structure comprises 278 residues: MSVPTAAKRITTRQLRMRTPDEPIVALTAYTAPIAGLLDAHCDLLLVGDSLGMVIYGMETTLPVTVDMMIQHGRAVMRGSQRACVAVDMPFGSYQEDERQAYRNAARIMAETGASCVKLEGGAEMASTVAFLVERGIPVMGHVGLKPQSVHGHGGFRTVGRGAEAEQVMADAQAIAAAGAFTVVIEGTLEPVARAITEALPVPTIGIGASPACGGQILVSDDVLGLFSDFTPRFVKRYAQLGPIIEQAAAAYASEVRARTFPAPEHCTGMPAPDGRPA.

Residues D49 and D88 each contribute to the Mg(2+) site. 3-methyl-2-oxobutanoate is bound by residues 49–50 (DS), D88, and K118. E120 is a Mg(2+) binding site. Residue E186 is the Proton acceptor of the active site.

It belongs to the PanB family. Homodecamer; pentamer of dimers. Requires Mg(2+) as cofactor.

It is found in the cytoplasm. The enzyme catalyses 3-methyl-2-oxobutanoate + (6R)-5,10-methylene-5,6,7,8-tetrahydrofolate + H2O = 2-dehydropantoate + (6S)-5,6,7,8-tetrahydrofolate. It functions in the pathway cofactor biosynthesis; (R)-pantothenate biosynthesis; (R)-pantoate from 3-methyl-2-oxobutanoate: step 1/2. In terms of biological role, catalyzes the reversible reaction in which hydroxymethyl group from 5,10-methylenetetrahydrofolate is transferred onto alpha-ketoisovalerate to form ketopantoate. The sequence is that of 3-methyl-2-oxobutanoate hydroxymethyltransferase from Bordetella parapertussis (strain 12822 / ATCC BAA-587 / NCTC 13253).